A 128-amino-acid chain; its full sequence is S-adenosylmethionine decarboxylase proenzyme (128 aa).

Residue Ser61 is the Schiff-base intermediate with substrate; via pyruvic acid of the active site. At Ser61 the chain carries Pyruvic acid (Ser); by autocatalysis. His66 acts as the Proton acceptor; for processing activity in catalysis. The active-site Proton donor; for catalytic activity is Cys81.

Belongs to the prokaryotic AdoMetDC family. Type 1 subfamily. Heterotetramer of two alpha and two beta chains arranged as a dimer of alpha/beta heterodimers. It depends on pyruvate as a cofactor. In terms of processing, is synthesized initially as an inactive proenzyme. Formation of the active enzyme involves a self-maturation process in which the active site pyruvoyl group is generated from an internal serine residue via an autocatalytic post-translational modification. Two non-identical subunits are generated from the proenzyme in this reaction, and the pyruvate is formed at the N-terminus of the alpha chain, which is derived from the carboxyl end of the proenzyme. The post-translation cleavage follows an unusual pathway, termed non-hydrolytic serinolysis, in which the side chain hydroxyl group of the serine supplies its oxygen atom to form the C-terminus of the beta chain, while the remainder of the serine residue undergoes an oxidative deamination to produce ammonia and the pyruvoyl group blocking the N-terminus of the alpha chain.

The catalysed reaction is S-adenosyl-L-methionine + H(+) = S-adenosyl 3-(methylsulfanyl)propylamine + CO2. The protein operates within amine and polyamine biosynthesis; S-adenosylmethioninamine biosynthesis; S-adenosylmethioninamine from S-adenosyl-L-methionine: step 1/1. Catalyzes the decarboxylation of S-adenosylmethionine to S-adenosylmethioninamine (dcAdoMet), the propylamine donor required for the synthesis of the polyamines spermine and spermidine from the diamine putrescine. This chain is S-adenosylmethionine decarboxylase proenzyme, found in Parasynechococcus marenigrum (strain WH8102).